We begin with the raw amino-acid sequence, 383 residues long: Histidine decarboxylase (383 aa).

Residue His120 coordinates substrate. N6-(pyridoxal phosphate)lysine is present on Lys233.

Belongs to the group II decarboxylase family. In terms of assembly, homotetramer. Pyridoxal 5'-phosphate is required as a cofactor.

It catalyses the reaction L-histidine + H(+) = histamine + CO2. The sequence is that of Histidine decarboxylase from Acinetobacter baumannii (strain ATCC 17978 / DSM 105126 / CIP 53.77 / LMG 1025 / NCDC KC755 / 5377).